The primary structure comprises 214 residues: Ribonuclease HII (214 aa).

Residues 18–208 enclose the RNase H type-2 domain; the sequence is SRVVGVDEVG…SLLPSEAHLC (191 aa). A divalent metal cation-binding residues include Asp24, Glu25, and Asp116.

The protein belongs to the RNase HII family. Requires Mn(2+) as cofactor. Mg(2+) is required as a cofactor.

The protein resides in the cytoplasm. It carries out the reaction Endonucleolytic cleavage to 5'-phosphomonoester.. In terms of biological role, endonuclease that specifically degrades the RNA of RNA-DNA hybrids. In Thermosynechococcus vestitus (strain NIES-2133 / IAM M-273 / BP-1), this protein is Ribonuclease HII.